The following is a 148-amino-acid chain: Deoxyuridine 5'-triphosphate nucleotidohydrolase (148 aa).

Residues 67–69 (RSG), asparagine 80, 84–86 (LID), and methionine 94 contribute to the substrate site.

It belongs to the dUTPase family. It depends on Mg(2+) as a cofactor.

The catalysed reaction is dUTP + H2O = dUMP + diphosphate + H(+). The protein operates within pyrimidine metabolism; dUMP biosynthesis; dUMP from dCTP (dUTP route): step 2/2. In terms of biological role, this enzyme is involved in nucleotide metabolism: it produces dUMP, the immediate precursor of thymidine nucleotides and it decreases the intracellular concentration of dUTP so that uracil cannot be incorporated into DNA. This chain is Deoxyuridine 5'-triphosphate nucleotidohydrolase, found in Burkholderia lata (strain ATCC 17760 / DSM 23089 / LMG 22485 / NCIMB 9086 / R18194 / 383).